The chain runs to 304 residues: Caspase-6 (304 aa).

Residues 1-29 (MSGAERRPAAGRVQLDSKPTPTTTADGNQ) are disordered. The propeptide occupies 1–35 (MSGAERRPAAGRVQLDSKPTPTTTADGNQNITEVD). A compositionally biased stretch (polar residues) spans 17–29 (SKPTPTTTADGNQ). The segment at 54-56 (QRR) is tri-arginine exosite. His-133 is an active-site residue. The 130's region stretch occupies residues 137 to 154 (DHVYAYDAQIKIETITNM). Cys-175 is an active-site residue. Residues 192–204 (SKDETTVNQTEVD) constitute a propeptide that is removed on maturation.

Belongs to the peptidase C14A family. As to quaternary structure, heterotetramer that consists of two anti-parallel arranged heterodimers, each one formed by a 18 kDa (p18) and a 11 kDa (p11) subunit. In terms of assembly, heterotetramer that consists of two anti-parallel arranged heterodimers, each one formed by a 18 kDa (Caspase-6 subunit p18) and a 11 kDa (Caspase-6 subunit p11) subunit. As to expression, widely expressed.

It localises to the cytoplasm. The protein resides in the nucleus. It carries out the reaction Strict requirement for Asp at position P1 and has a preferred cleavage sequence of Val-Glu-His-Asp-|-.. During activation, the N-terminal prodomain is removed by cleavage. Concomitantly, double cleavage gives rise to a large 18-kDa and a small 11-kDa subunit. The two large and two small subunits then assemble to form the active CASP6 complex. Intramolecular cleavage at Asp-191 is a prerequisite for CASP6 self-activation. In terms of biological role, cysteine protease that plays essential roles in programmed cell death, development and innate immunity. Acts as a non-canonical executioner caspase during apoptosis: localizes in the nucleus and cleaves the nuclear structural protein lamin-A/LMNA thereby inducing nuclear shrinkage and fragmentation. Lamin-A/LMNA cleavage is required for chromatin condensation and nuclear disassembly during apoptotic execution. Plays an essential role in defense against viruses by acting as a central mediator of the ZBP1-mediated pyroptosis, apoptosis, and necroptosis (PANoptosis), independently of its cysteine protease activity. PANoptosis is a unique inflammatory programmed cell death, which provides a molecular scaffold that allows the interactions and activation of machinery required for inflammasome/pyroptosis, apoptosis and necroptosis. The chain is Caspase-6 from Gallus gallus (Chicken).